Consider the following 203-residue polypeptide: Glycerol-3-phosphate acyltransferase (203 aa).

The next 6 membrane-spanning stretches (helical) occupy residues 3-23 (ILLATVAAYLIGSVSFAVVVS), 51-71 (KAAILTLVGDAFKGWLAVWLV), 74-94 (FGIGGEIGVALAAIAVFLGHL), 116-136 (AVHPVLGLATALTWLIVAFFF), 140-160 (SLAALVAAVFAPIFDVFLFGT), and 164-178 (PVAWAVLAMSVLLIW).

This sequence belongs to the PlsY family. Probably interacts with PlsX.

It localises to the cell inner membrane. It carries out the reaction an acyl phosphate + sn-glycerol 3-phosphate = a 1-acyl-sn-glycero-3-phosphate + phosphate. It functions in the pathway lipid metabolism; phospholipid metabolism. Its function is as follows. Catalyzes the transfer of an acyl group from acyl-phosphate (acyl-PO(4)) to glycerol-3-phosphate (G3P) to form lysophosphatidic acid (LPA). This enzyme utilizes acyl-phosphate as fatty acyl donor, but not acyl-CoA or acyl-ACP. The protein is Glycerol-3-phosphate acyltransferase of Burkholderia pseudomallei (strain K96243).